The sequence spans 557 residues: UvrABC system protein C (557 aa).

The region spanning 14–89 is the GIY-YIG domain; sequence EEPGVYIFKN…IKKYRPKYNV (76 aa). The UVR domain maps to 194–229; the sequence is EEVFDYLKEKMETHSRMLDFENAAKYRDLLLNLSNV.

Belongs to the UvrC family. In terms of assembly, interacts with UvrB in an incision complex.

The protein resides in the cytoplasm. In terms of biological role, the UvrABC repair system catalyzes the recognition and processing of DNA lesions. UvrC both incises the 5' and 3' sides of the lesion. The N-terminal half is responsible for the 3' incision and the C-terminal half is responsible for the 5' incision. In Thermotoga petrophila (strain ATCC BAA-488 / DSM 13995 / JCM 10881 / RKU-1), this protein is UvrABC system protein C.